Reading from the N-terminus, the 207-residue chain is 2,3-bisphosphoglycerate-dependent phosphoglycerate mutase (207 aa).

Residues 9-16 (RHGQSDWN), 22-23 (TG), arginine 61, 88-91 (ERDY), lysine 99, 115-116 (RR), and 159-160 (GN) each bind substrate. Histidine 10 serves as the catalytic Tele-phosphohistidine intermediate. The active-site Proton donor/acceptor is the glutamate 88.

Belongs to the phosphoglycerate mutase family. BPG-dependent PGAM subfamily. As to quaternary structure, homodimer.

It carries out the reaction (2R)-2-phosphoglycerate = (2R)-3-phosphoglycerate. Its pathway is carbohydrate degradation; glycolysis; pyruvate from D-glyceraldehyde 3-phosphate: step 3/5. Its function is as follows. Catalyzes the interconversion of 2-phosphoglycerate and 3-phosphoglycerate. The protein is 2,3-bisphosphoglycerate-dependent phosphoglycerate mutase of Beijerinckia indica subsp. indica (strain ATCC 9039 / DSM 1715 / NCIMB 8712).